The sequence spans 535 residues: Bifunctional purine biosynthesis protein PurH (535 aa).

Residues 1–148 (MNNARPIRRA…KNHKDTTIIV (148 aa)) enclose the MGS-like domain.

The protein belongs to the PurH family.

It catalyses the reaction (6R)-10-formyltetrahydrofolate + 5-amino-1-(5-phospho-beta-D-ribosyl)imidazole-4-carboxamide = 5-formamido-1-(5-phospho-D-ribosyl)imidazole-4-carboxamide + (6S)-5,6,7,8-tetrahydrofolate. The catalysed reaction is IMP + H2O = 5-formamido-1-(5-phospho-D-ribosyl)imidazole-4-carboxamide. The protein operates within purine metabolism; IMP biosynthesis via de novo pathway; 5-formamido-1-(5-phospho-D-ribosyl)imidazole-4-carboxamide from 5-amino-1-(5-phospho-D-ribosyl)imidazole-4-carboxamide (10-formyl THF route): step 1/1. It participates in purine metabolism; IMP biosynthesis via de novo pathway; IMP from 5-formamido-1-(5-phospho-D-ribosyl)imidazole-4-carboxamide: step 1/1. This chain is Bifunctional purine biosynthesis protein PurH, found in Shewanella woodyi (strain ATCC 51908 / MS32).